The primary structure comprises 572 residues: MQQVIPAPRVQVTQPYAGQKPGTSGLRKKVTEATQPHYLENFVQSIFNTLRKDELKPKNVLFVGGDGRYFNRQAIFSIIRLAYANDISEVHVGQAGLMSTPASSHYIRKVNEEVGNCIGGIILTASHNPGGKEHGDFGIKFNVRTGAPAPEDFTDQIYTHTTKIKEYLTVDYEFEKHINLDQIGVYKFEGTRLEKSHFEVKVVDTVQDYTSLMQKLFDFDLLKGLFSNKDFTFSFDGMHGVAGPYAKHIFGTLLGCSKESLLNCDPSEDFGGGHPDPNLTYAHDLVELLDIHKKKDVGAVPQFGAACDGDADRNMILGRQFFVTPSDSLAVIAANANLIFKNGLLGAARSMPTSGALDKVAAKNGIKLFETPTGWKFFGNLMDAGLINLCGEESFGTGSNHIREKDGIWAVLAWLTILAHKNKNTDHFVTVEEIVTQYWQQFGRNYYSRYDYEQVDSAGANKMMEHLKTKFQYFEQLKQGNKADIYDYVDPVDQSVSKNQGVRFVFGDGSRIIFRLSGTGSVGATIRIYFEQFEQQEIQHETATALANIIKLGLEISDIAQFTGRNEPTVIT.

Substrate-binding positions include T23, R27, 126–127, and K140; that span reads SH. Residue S126 is the Phosphoserine intermediate of the active site. Mg(2+) is bound at residue S126. Residues D308, D310, and D312 each coordinate Mg(2+). Residues 312 to 313, T373, 392 to 394, K405, and R527 each bind substrate; these read DR and EES.

Belongs to the phosphohexose mutase family. Requires Mg(2+) as cofactor. Phosphorylated via a calcium-dependent protein kinase.

The protein resides in the cytoplasm. It catalyses the reaction alpha-D-glucose 1-phosphate = alpha-D-glucose 6-phosphate. Its function is as follows. May be involved in membrane fusion in exocytosis. This is Phosphoglucomutase-2 (pp63-2) from Paramecium tetraurelia.